Here is a 216-residue protein sequence, read N- to C-terminus: Probable nicotinate-nucleotide adenylyltransferase (216 aa).

It belongs to the NadD family.

The catalysed reaction is nicotinate beta-D-ribonucleotide + ATP + H(+) = deamido-NAD(+) + diphosphate. The protein operates within cofactor biosynthesis; NAD(+) biosynthesis; deamido-NAD(+) from nicotinate D-ribonucleotide: step 1/1. Functionally, catalyzes the reversible adenylation of nicotinate mononucleotide (NaMN) to nicotinic acid adenine dinucleotide (NaAD). This is Probable nicotinate-nucleotide adenylyltransferase from Klebsiella pneumoniae (strain 342).